A 258-amino-acid chain; its full sequence is Imidazole glycerol phosphate synthase subunit HisF (258 aa).

Residues D11 and D130 contribute to the active site.

This sequence belongs to the HisA/HisF family. In terms of assembly, heterodimer of HisH and HisF.

It is found in the cytoplasm. The enzyme catalyses 5-[(5-phospho-1-deoxy-D-ribulos-1-ylimino)methylamino]-1-(5-phospho-beta-D-ribosyl)imidazole-4-carboxamide + L-glutamine = D-erythro-1-(imidazol-4-yl)glycerol 3-phosphate + 5-amino-1-(5-phospho-beta-D-ribosyl)imidazole-4-carboxamide + L-glutamate + H(+). The protein operates within amino-acid biosynthesis; L-histidine biosynthesis; L-histidine from 5-phospho-alpha-D-ribose 1-diphosphate: step 5/9. IGPS catalyzes the conversion of PRFAR and glutamine to IGP, AICAR and glutamate. The HisF subunit catalyzes the cyclization activity that produces IGP and AICAR from PRFAR using the ammonia provided by the HisH subunit. This is Imidazole glycerol phosphate synthase subunit HisF from Rhodopseudomonas palustris (strain BisB18).